We begin with the raw amino-acid sequence, 213 residues long: MQPRKPQQIARELALLSLSQLPVNPKKLDTLLDDQLVSKLVLGAVRTLTSEVQDTLNNAAGELQRSNDRLLSSQTRASDLNSARTMLQEAIACTQTAINQLGTAVDFPELIQLANQDKGVRNYAKELVITVNENRHIIDELLSTALVDWQVTRLAQLDRDILQIAVAEMKFLGVPDSIAINEAVELAKRYSGDDGHRFINGVLRRVTEQKKTA.

It belongs to the NusB family.

In terms of biological role, involved in transcription antitermination. Required for transcription of ribosomal RNA (rRNA) genes. Binds specifically to the boxA antiterminator sequence of the ribosomal RNA (rrn) operons. The polypeptide is Transcription antitermination protein NusB (Nostoc punctiforme (strain ATCC 29133 / PCC 73102)).